We begin with the raw amino-acid sequence, 190 residues long: uncharacterized protein (190 aa).

Residues 12–34 (LLGLSIFLTTFLFVANFLPGIFA) form a helical membrane-spanning segment.

The protein resides in the membrane. This is an uncharacterized protein from Archaeoglobus fulgidus (strain ATCC 49558 / DSM 4304 / JCM 9628 / NBRC 100126 / VC-16).